A 629-amino-acid polypeptide reads, in one-letter code: uncharacterized protein (629 aa).

One can recognise an ABC transporter 1 domain in the interval 4 to 255 (LKAENLYKTY…KRAEREAQAE (252 aa)). An ATP-binding site is contributed by 36–43 (GPNGTGKS). The interval 284-304 (KARIDRVETLKEQTGPQSSGS) is disordered. Over residues 285–294 (ARIDRVETLK) the composition is skewed to basic and acidic residues. Positions 295-304 (EQTGPQSSGS) are enriched in polar residues. The ABC transporter 2 domain maps to 319–537 (IEAENVMIAY…EESKAKKAAP (219 aa)). 351–358 (GPNGIGKT) provides a ligand contact to ATP. Residues 530 to 555 (SKAKKAAPKPAAEEKTAEAEPKKKRK) are disordered. The segment covering 540–550 (AAEEKTAEAEP) has biased composition (basic and acidic residues). Residues 560–629 (KDQLEWDGIE…LSLMIEELES (70 aa)) adopt a coiled-coil conformation.

It belongs to the ABC transporter superfamily.

This is an uncharacterized protein from Bacillus subtilis (strain 168).